Consider the following 439-residue polypeptide: C4-dicarboxylate transport protein (439 aa).

A run of 9 helical transmembrane segments spans residues 9-29 (HLYF…YYMP), 45-65 (MIKM…IAGM), 80-100 (LYFE…INVI), 150-170 (GEIL…SAMG), 186-206 (AFFG…FGAM), 221-241 (LGML…VVLG), 291-311 (VVGL…SIYL), 334-354 (ILGV…SGFV), and 357-377 (AATF…ILGI).

This sequence belongs to the dicarboxylate/amino acid:cation symporter (DAACS) (TC 2.A.23) family.

It localises to the cell inner membrane. In terms of biological role, responsible for the transport of dicarboxylates such as succinate, fumarate, and malate from the periplasm across the membrane. This chain is C4-dicarboxylate transport protein, found in Citrifermentans bemidjiense (strain ATCC BAA-1014 / DSM 16622 / JCM 12645 / Bem) (Geobacter bemidjiensis).